Consider the following 269-residue polypeptide: Sushi domain-containing protein 3 (269 aa).

Residues 1–23 (MRRTSATLRGRARPRWRAGNTTP) form a disordered region. Residues 1-103 (MRRTSATLRG…VPPHETFGFK (103 aa)) lie on the Extracellular side of the membrane. In terms of domain architecture, Sushi spans 30-93 (GTCAQLHPPP…WSSGSPVCKA (64 aa)). 2 cysteine pairs are disulfide-bonded: C32–C75 and C61–C91. The chain crosses the membrane as a helical span at residues 104–124 (VAVIASIVSCAIILLMSMAFL). Residues 125 to 269 (TCCLLKCVQK…PGRPKVYLPG (145 aa)) lie on the Cytoplasmic side of the membrane. Residues 171–237 (NNSSSVGGGN…RMGTPGPGGC (67 aa)) form a disordered region. Over residues 176–190 (VGGGNGGPSGGGGKP) the composition is skewed to gly residues.

The protein resides in the cell membrane. The polypeptide is Sushi domain-containing protein 3 (Susd3) (Mus musculus (Mouse)).